The sequence spans 1054 residues: Isoleucine--tRNA ligase (1054 aa).

The short motif at 58 to 68 is the 'HIGH' region element; the sequence is PFANGLPHYGH. The 'KMSKS' region motif lies at 627-631; sequence KMSKS. Lys-630 lines the ATP pocket.

The protein belongs to the class-I aminoacyl-tRNA synthetase family. IleS type 2 subfamily. In terms of assembly, monomer. The cofactor is Zn(2+).

Its subcellular location is the cytoplasm. It carries out the reaction tRNA(Ile) + L-isoleucine + ATP = L-isoleucyl-tRNA(Ile) + AMP + diphosphate. In terms of biological role, catalyzes the attachment of isoleucine to tRNA(Ile). As IleRS can inadvertently accommodate and process structurally similar amino acids such as valine, to avoid such errors it has two additional distinct tRNA(Ile)-dependent editing activities. One activity is designated as 'pretransfer' editing and involves the hydrolysis of activated Val-AMP. The other activity is designated 'posttransfer' editing and involves deacylation of mischarged Val-tRNA(Ile). The sequence is that of Isoleucine--tRNA ligase from Corynebacterium efficiens (strain DSM 44549 / YS-314 / AJ 12310 / JCM 11189 / NBRC 100395).